Reading from the N-terminus, the 282-residue chain is Bifunctional protein FolD (282 aa).

Residues 166 to 168 (GAS) and Ile232 contribute to the NADP(+) site.

The protein belongs to the tetrahydrofolate dehydrogenase/cyclohydrolase family. As to quaternary structure, homodimer.

It carries out the reaction (6R)-5,10-methylene-5,6,7,8-tetrahydrofolate + NADP(+) = (6R)-5,10-methenyltetrahydrofolate + NADPH. The enzyme catalyses (6R)-5,10-methenyltetrahydrofolate + H2O = (6R)-10-formyltetrahydrofolate + H(+). The protein operates within one-carbon metabolism; tetrahydrofolate interconversion. Catalyzes the oxidation of 5,10-methylenetetrahydrofolate to 5,10-methenyltetrahydrofolate and then the hydrolysis of 5,10-methenyltetrahydrofolate to 10-formyltetrahydrofolate. This chain is Bifunctional protein FolD, found in Haemophilus influenzae (strain PittGG).